Here is a 2355-residue protein sequence, read N- to C-terminus: Acetyl-CoA carboxylase 2 (2355 aa).

Residues 138–645 (PIHSILVATN…HTGWLDSRIA (508 aa)) enclose the Biotin carboxylation domain. The ATP-grasp domain occupies 291 to 485 (GRSLVTVPEE…AAQVAVGMGI (195 aa)). 317–374 (CQVVGYPAMIKASWGGGGKGIRKVHNDDEVRALFKQVQGEVPGSPIFIMKVASQSRHL) is an ATP binding site. Glutamate 440, glutamate 454, and asparagine 456 together coordinate Mg(2+). 3 residues coordinate Mn(2+): glutamate 440, glutamate 454, and asparagine 456. The active site involves arginine 458. The Biotinyl-binding domain occupies 772-846 (LQNDHDPSKL…QAGELIAKLD (75 aa)). N6-biotinyllysine is present on lysine 813. At threonine 1133 the chain carries Phosphothreonine. The residue at position 1293 (serine 1293) is a Phosphoserine. The 340-residue stretch at 1593 to 1932 (QYKPLNNLDR…YVGGPLPVLA (340 aa)) folds into the CoA carboxyltransferase N-terminal domain. The interval 1593-2251 (QYKPLNNLDR…ESSLVRNIRK (659 aa)) is carboxyltransferase. Residues arginine 1841, lysine 2142, and arginine 2144 each contribute to the CoA site. The CoA carboxyltransferase C-terminal domain occupies 1936–2251 (PPERTVEYIP…ESSLVRNIRK (316 aa)).

In terms of assembly, homodimer. Biotin is required as a cofactor. Mg(2+) serves as cofactor. The cofactor is Mn(2+). As to expression, widely expressed at low levels.

It localises to the cytoplasm. Its subcellular location is the cytosol. It carries out the reaction hydrogencarbonate + acetyl-CoA + ATP = malonyl-CoA + ADP + phosphate + H(+). It catalyses the reaction N(6)-biotinyl-L-lysyl-[protein] + hydrogencarbonate + ATP = N(6)-carboxybiotinyl-L-lysyl-[protein] + ADP + phosphate + H(+). Its pathway is lipid metabolism; malonyl-CoA biosynthesis; malonyl-CoA from acetyl-CoA: step 1/1. Its function is as follows. Multifunctional enzyme that catalyzes the carboxylation of acetyl-CoA, forming malonyl-CoA, which is used in the plastid for fatty acid synthesis and in the cytosol in various biosynthetic pathways including fatty acid elongation. In Arabidopsis thaliana (Mouse-ear cress), this protein is Acetyl-CoA carboxylase 2 (ACC2).